The chain runs to 408 residues: Acetylornithine aminotransferase (408 aa).

Pyridoxal 5'-phosphate is bound by residues 107–108 (GT) and Phe141. Arg144 contributes to the N(2)-acetyl-L-ornithine binding site. Position 227–230 (227–230 (DEIQ)) interacts with pyridoxal 5'-phosphate. Residue Lys256 is modified to N6-(pyridoxal phosphate)lysine. Residue Thr284 participates in N(2)-acetyl-L-ornithine binding. Thr285 contributes to the pyridoxal 5'-phosphate binding site.

The protein belongs to the class-III pyridoxal-phosphate-dependent aminotransferase family. ArgD subfamily. As to quaternary structure, homodimer. Pyridoxal 5'-phosphate serves as cofactor.

It is found in the cytoplasm. It carries out the reaction N(2)-acetyl-L-ornithine + 2-oxoglutarate = N-acetyl-L-glutamate 5-semialdehyde + L-glutamate. Its pathway is amino-acid biosynthesis; L-arginine biosynthesis; N(2)-acetyl-L-ornithine from L-glutamate: step 4/4. The polypeptide is Acetylornithine aminotransferase (Xanthomonas campestris pv. campestris (strain ATCC 33913 / DSM 3586 / NCPPB 528 / LMG 568 / P 25)).